Consider the following 459-residue polypeptide: Glycosyl hydrolase family 109 protein 1 (459 aa).

The tat-type signal signal peptide spans 1–31 (MHNIHRRHFLKAAGAVTAGLVTANIALNANA). NAD(+) is bound by residues 64–65 (ER), Asp86, 135–138 (WEWH), 155–156 (EV), and Asn184. Substrate-binding positions include Tyr213, Arg232, 244 to 247 (YPTH), and Tyr326. Tyr244 lines the NAD(+) pocket.

This sequence belongs to the Gfo/Idh/MocA family. Glycosyl hydrolase 109 subfamily. NAD(+) serves as cofactor. In terms of processing, predicted to be exported by the Tat system. The position of the signal peptide cleavage has not been experimentally proven.

Glycosidase. The polypeptide is Glycosyl hydrolase family 109 protein 1 (Shewanella sp. (strain MR-4)).